Consider the following 85-residue polypeptide: Large ribosomal subunit protein bL27 (85 aa).

The tract at residues 1 to 22 is disordered; it reads MAHKKAGGSTKNGRDSESKRLG.

This sequence belongs to the bacterial ribosomal protein bL27 family.

The chain is Large ribosomal subunit protein bL27 from Idiomarina loihiensis (strain ATCC BAA-735 / DSM 15497 / L2-TR).